We begin with the raw amino-acid sequence, 104 residues long: NADH-quinone oxidoreductase subunit K (104 aa).

Transmembrane regions (helical) follow at residues 4-24 (VPAS…LFGA), 31-51 (VIVL…LVAF), and 67-87 (LFTM…LIAL).

Belongs to the complex I subunit 4L family. As to quaternary structure, NDH-1 is composed of 14 different subunits. Subunits NuoA, H, J, K, L, M, N constitute the membrane sector of the complex.

The protein resides in the cell membrane. It catalyses the reaction a quinone + NADH + 5 H(+)(in) = a quinol + NAD(+) + 4 H(+)(out). In terms of biological role, NDH-1 shuttles electrons from NADH, via FMN and iron-sulfur (Fe-S) centers, to quinones in the respiratory chain. The immediate electron acceptor for the enzyme in this species is believed to be a menaquinone. Couples the redox reaction to proton translocation (for every two electrons transferred, four hydrogen ions are translocated across the cytoplasmic membrane), and thus conserves the redox energy in a proton gradient. The chain is NADH-quinone oxidoreductase subunit K from Bacillus cytotoxicus (strain DSM 22905 / CIP 110041 / 391-98 / NVH 391-98).